The sequence spans 549 residues: Membrane protein insertase YidC (549 aa).

Residues 9–29 (LRLILAIALSFLFIALYSYFF) form a helical membrane-spanning segment. Residues 37–51 (TETTKQETTNNHTAT) show a composition bias toward low complexity. The tract at residues 37–56 (TETTKQETTNNHTATSPTAS) is disordered. 5 consecutive transmembrane segments (helical) span residues 328–348 (VIEY…LDYL), 351–371 (FVGN…IILY), 417–437 (GANP…FFAI), 452–472 (WVLW…PLLM), and 498–518 (LLPL…VLYW).

Belongs to the OXA1/ALB3/YidC family. Type 1 subfamily. In terms of assembly, interacts with the Sec translocase complex via SecD. Specifically interacts with transmembrane segments of nascent integral membrane proteins during membrane integration.

It localises to the cell inner membrane. Its function is as follows. Required for the insertion and/or proper folding and/or complex formation of integral membrane proteins into the membrane. Involved in integration of membrane proteins that insert both dependently and independently of the Sec translocase complex, as well as at least some lipoproteins. Aids folding of multispanning membrane proteins. This chain is Membrane protein insertase YidC, found in Helicobacter pylori (strain J99 / ATCC 700824) (Campylobacter pylori J99).